The following is a 289-amino-acid chain: Syntaxin-2 (289 aa).

Residues 1-265 (MRDRLPDLTA…KYQSKARRKK (265 aa)) are Cytoplasmic-facing. Residues 68–101 (EGKIKEELEDLDKEIKKTANRIRGKLKSIEQSCD) adopt a coiled-coil conformation. The t-SNARE coiled-coil homology domain maps to 192-254 (LNEIESRHKD…EHAKEETKKA (63 aa)). The helical; Anchor for type IV membrane protein transmembrane segment at 266–289 (WIIAAVAVAVIAVLALIIGLSVGK) threads the bilayer.

It belongs to the syntaxin family. As to quaternary structure, interacts with SYT6 and SYT8; the interaction is Ca(2+)-dependent.

It is found in the membrane. Its function is as follows. Essential for epithelial morphogenesis. May mediate Ca(2+)-regulation of exocytosis acrosomal reaction in sperm. This chain is Syntaxin-2 (Stx2), found in Mus musculus (Mouse).